A 439-amino-acid chain; its full sequence is Proline--tRNA ligase (439 aa).

The protein belongs to the class-II aminoacyl-tRNA synthetase family. ProS type 2 subfamily. In terms of assembly, homodimer.

Its subcellular location is the cytoplasm. The catalysed reaction is tRNA(Pro) + L-proline + ATP = L-prolyl-tRNA(Pro) + AMP + diphosphate. Catalyzes the attachment of proline to tRNA(Pro) in a two-step reaction: proline is first activated by ATP to form Pro-AMP and then transferred to the acceptor end of tRNA(Pro). The protein is Proline--tRNA ligase of Nitrobacter winogradskyi (strain ATCC 25391 / DSM 10237 / CIP 104748 / NCIMB 11846 / Nb-255).